The sequence spans 425 residues: Glutamyl-tRNA reductase (425 aa).

Substrate is bound by residues 47-50 (TCNR), Ser-107, 112-114 (EDQ), and Gln-118. Residue Cys-48 is the Nucleophile of the active site. 187–192 (GAGHIA) is a binding site for NADP(+).

This sequence belongs to the glutamyl-tRNA reductase family. Homodimer.

It catalyses the reaction (S)-4-amino-5-oxopentanoate + tRNA(Glu) + NADP(+) = L-glutamyl-tRNA(Glu) + NADPH + H(+). It functions in the pathway porphyrin-containing compound metabolism; protoporphyrin-IX biosynthesis; 5-aminolevulinate from L-glutamyl-tRNA(Glu): step 1/2. Its pathway is porphyrin-containing compound metabolism; chlorophyll biosynthesis. Functionally, catalyzes the NADPH-dependent reduction of glutamyl-tRNA(Glu) to glutamate 1-semialdehyde (GSA). This chain is Glutamyl-tRNA reductase, found in Roseiflexus sp. (strain RS-1).